The chain runs to 161 residues: RNA pyrophosphohydrolase (161 aa).

Positions 12–154 constitute a Nudix hydrolase domain; it reads PYRPGVGMMI…KRKLYQAVVK (143 aa). The Nudix box signature appears at 46-67; that stretch reads GGIVPGETPSIAAMREMLEEIG.

The protein belongs to the Nudix hydrolase family. RppH subfamily. A divalent metal cation is required as a cofactor.

Accelerates the degradation of transcripts by removing pyrophosphate from the 5'-end of triphosphorylated RNA, leading to a more labile monophosphorylated state that can stimulate subsequent ribonuclease cleavage. The protein is RNA pyrophosphohydrolase of Rickettsia typhi (strain ATCC VR-144 / Wilmington).